Consider the following 203-residue polypeptide: Orotate phosphoribosyltransferase (203 aa).

5-phospho-alpha-D-ribose 1-diphosphate contacts are provided by residues Arg94, Lys98, His100, and 120–128 (EDLISTGGS). Ser124 provides a ligand contact to orotate.

This sequence belongs to the purine/pyrimidine phosphoribosyltransferase family. PyrE subfamily. Homodimer. It depends on Mg(2+) as a cofactor.

It catalyses the reaction orotidine 5'-phosphate + diphosphate = orotate + 5-phospho-alpha-D-ribose 1-diphosphate. It functions in the pathway pyrimidine metabolism; UMP biosynthesis via de novo pathway; UMP from orotate: step 1/2. In terms of biological role, catalyzes the transfer of a ribosyl phosphate group from 5-phosphoribose 1-diphosphate to orotate, leading to the formation of orotidine monophosphate (OMP). This chain is Orotate phosphoribosyltransferase, found in Staphylococcus epidermidis (strain ATCC 35984 / DSM 28319 / BCRC 17069 / CCUG 31568 / BM 3577 / RP62A).